We begin with the raw amino-acid sequence, 420 residues long: Subtilisin (420 aa).

The first 31 residues, 1 to 31, serve as a signal peptide directing secretion; it reads MKRSGKIFTTAMLAVTLMMPAMGVSANEGNA. Positions 32 to 111 are excised as a propeptide; sequence AAEGNEKFRV…DKPEALYNAM (80 aa). Gln-115 lines the Ca(2+) pocket. Residues 118 to 420 enclose the Peptidase S8 domain; it reads PWGIKAIYNN…ASGFGFATVQ (303 aa). Catalysis depends on Asp-145, which acts as the Charge relay system. Residue Asp-154 coordinates Ca(2+). Active-site charge relay system residues include His-182 and Ser-360.

This sequence belongs to the peptidase S8 family. Ca(2+) serves as cofactor.

It is found in the secreted. It catalyses the reaction Hydrolysis of proteins with broad specificity for peptide bonds, and a preference for a large uncharged residue in P1. Hydrolyzes peptide amides.. Its function is as follows. Subtilisin is an extracellular alkaline serine protease, it catalyzes the hydrolysis of proteins and peptide amides. The protein is Subtilisin (sub1) of Bacillus sp. (strain TA39).